Consider the following 143-residue polypeptide: Large-conductance mechanosensitive channel (143 aa).

3 consecutive transmembrane segments (helical) span residues 16–36 (VMDLAVGVIIGGAFSGITNSL), 40–60 (IIMPIVAFIAGGELNFKNMFI), and 87–107 (GSFITVLINFLILAFIIFMMV).

Belongs to the MscL family. Homopentamer.

The protein localises to the cell inner membrane. Its function is as follows. Channel that opens in response to stretch forces in the membrane lipid bilayer. May participate in the regulation of osmotic pressure changes within the cell. This Psychrobacter sp. (strain PRwf-1) protein is Large-conductance mechanosensitive channel.